The sequence spans 519 residues: Probable DNA ligase (519 aa).

Residue glutamate 211 coordinates ATP. The active-site N6-AMP-lysine intermediate is lysine 213. Positions 218, 233, 262, 302, 374, and 380 each coordinate ATP.

This sequence belongs to the ATP-dependent DNA ligase family. Requires Mg(2+) as cofactor.

It catalyses the reaction ATP + (deoxyribonucleotide)n-3'-hydroxyl + 5'-phospho-(deoxyribonucleotide)m = (deoxyribonucleotide)n+m + AMP + diphosphate.. Its function is as follows. DNA ligase that seals nicks in double-stranded DNA during DNA replication, DNA recombination and DNA repair. The polypeptide is Probable DNA ligase (Anaeromyxobacter sp. (strain Fw109-5)).